The primary structure comprises 261 residues: Neurexophilin-2 (261 aa).

The signal sequence occupies residues 1–22; sequence MSLRPLPLLVVPGLLQLLFCDS. The interval 23-87 is II; that stretch reads EEVIHNTESV…WDWLANITEI (65 aa). N-linked (GlcNAc...) asparagine glycosylation is found at N83, N136, N146, and N152. The III stretch occupies residues 88–166; that stretch reads QEQLARTKRR…LVPPSKVVEF (79 aa). Residues 167–175 are IV (linker domain); sequence EISPQSTLE. A v (Cys-rich) region spans residues 176–261; the sequence is TKESKSFNCH…HSETPYLSFG (86 aa).

It belongs to the neurexophilin family. May be proteolytically processed at the boundary between the N-terminal non-conserved and the central conserved domain in neuron-like cells.

It is found in the secreted. Its function is as follows. May be signaling molecules that resemble neuropeptides and that act by binding to alpha-neurexins and possibly other receptors. The chain is Neurexophilin-2 (Nxph2) from Mus musculus (Mouse).